A 487-amino-acid chain; its full sequence is Fibroblast growth factor receptor-like 1 (487 aa).

The N-terminal stretch at 1–18 (MGLQLALLLAGIVALSDS) is a signal peptide. At 19–371 (ARGPPRIADK…PSSVSSLPWP (353 aa)) the chain is on the extracellular side. Residues 23–109 (PRIADKVIHR…GSTNVNYTLI (87 aa)) form the Ig-like C2-type 1 domain. Residues C45 and C93 are joined by a disulfide bond. A glycan (N-linked (GlcNAc...) asparagine) is linked at N105. A compositionally biased stretch (polar residues) spans 115-125 (SSGKNSQTPEG). The tract at residues 115 to 147 (SSGKNSQTPEGSNGEYEDHSGKQWAQPRFTQPA) is disordered. Ig-like C2-type domains are found at residues 141–231 (PRFT…YKVE) and 240–348 (PILT…AFLT). C166 and C215 form a disulfide bridge. N-linked (GlcNAc...) asparagine glycans are attached at residues N225, N249, and N287. C262 and C332 are oxidised to a cystine. Residues 372 to 392 (VIIGIPAGAVFIFGTILLWLC) form a helical membrane-spanning segment. Residues 393–487 (QTKKKPCSPP…HQHQHIQYQC (95 aa)) are Cytoplasmic-facing.

Interacts with heparin and FGF2. In terms of tissue distribution, expressed in cartilaginous structures.

The protein localises to the cell membrane. Has a negative effect on cell proliferation. In Gallus gallus (Chicken), this protein is Fibroblast growth factor receptor-like 1 (FGFRL1).